A 321-amino-acid chain; its full sequence is Ribose-phosphate pyrophosphokinase (321 aa).

Residues 44–46 and 103–104 contribute to the ATP site; these read DGE and RQ. The Mg(2+) site is built by His-137 and Asp-179. Lys-202 is an active-site residue. Residues Arg-204, Asp-228, and 232–236 each bind D-ribose 5-phosphate; that span reads DTAGT.

This sequence belongs to the ribose-phosphate pyrophosphokinase family. Class I subfamily. As to quaternary structure, homohexamer. It depends on Mg(2+) as a cofactor.

Its subcellular location is the cytoplasm. The catalysed reaction is D-ribose 5-phosphate + ATP = 5-phospho-alpha-D-ribose 1-diphosphate + AMP + H(+). It participates in metabolic intermediate biosynthesis; 5-phospho-alpha-D-ribose 1-diphosphate biosynthesis; 5-phospho-alpha-D-ribose 1-diphosphate from D-ribose 5-phosphate (route I): step 1/1. Its function is as follows. Involved in the biosynthesis of the central metabolite phospho-alpha-D-ribosyl-1-pyrophosphate (PRPP) via the transfer of pyrophosphoryl group from ATP to 1-hydroxyl of ribose-5-phosphate (Rib-5-P). The protein is Ribose-phosphate pyrophosphokinase of Staphylococcus haemolyticus (strain JCSC1435).